The chain runs to 81 residues: ATP synthase subunit c (81 aa).

The next 2 membrane-spanning stretches (helical) occupy residues 5 to 25 (IAAG…IGAG) and 57 to 77 (VGLV…FVFA).

Belongs to the ATPase C chain family. F-type ATPases have 2 components, F(1) - the catalytic core - and F(0) - the membrane proton channel. F(1) has five subunits: alpha(3), beta(3), gamma(1), delta(1), epsilon(1). F(0) has three main subunits: a(1), b(2) and c(10-14). The alpha and beta chains form an alternating ring which encloses part of the gamma chain. F(1) is attached to F(0) by a central stalk formed by the gamma and epsilon chains, while a peripheral stalk is formed by the delta and b chains.

The protein localises to the cell membrane. F(1)F(0) ATP synthase produces ATP from ADP in the presence of a proton or sodium gradient. F-type ATPases consist of two structural domains, F(1) containing the extramembraneous catalytic core and F(0) containing the membrane proton channel, linked together by a central stalk and a peripheral stalk. During catalysis, ATP synthesis in the catalytic domain of F(1) is coupled via a rotary mechanism of the central stalk subunits to proton translocation. In terms of biological role, key component of the F(0) channel; it plays a direct role in translocation across the membrane. A homomeric c-ring of between 10-14 subunits forms the central stalk rotor element with the F(1) delta and epsilon subunits. The polypeptide is ATP synthase subunit c (Mycobacterium sp. (strain JLS)).